An 89-amino-acid polypeptide reads, in one-letter code: Large ribosomal subunit protein bL27 (89 aa).

The protein belongs to the bacterial ribosomal protein bL27 family.

The polypeptide is Large ribosomal subunit protein bL27 (Bacteroides fragilis (strain ATCC 25285 / DSM 2151 / CCUG 4856 / JCM 11019 / LMG 10263 / NCTC 9343 / Onslow / VPI 2553 / EN-2)).